A 326-amino-acid polypeptide reads, in one-letter code: WD repeat-containing protein slr1409 (326 aa).

WD repeat units lie at residues 47–77 (GSDV…TLWT), 88–118 (GQKP…RLWN), 129–159 (PHRA…KIFT), 169–199 (LKSG…HLIN), 210–240 (TGQG…KLWN), and 252–282 (VPTG…RFWQ).

This Synechocystis sp. (strain ATCC 27184 / PCC 6803 / Kazusa) protein is WD repeat-containing protein slr1409.